We begin with the raw amino-acid sequence, 309 residues long: uncharacterized protein (309 aa).

2 disordered regions span residues 1 to 94 (IGEV…RQQI) and 286 to 309 (HTRN…PPRG). Pro residues predominate over residues 30–43 (PAQPPSPAPTPSRT). Residues 58–67 (RSKTPDKRSA) are compositionally biased toward basic and acidic residues. Residues 297–309 (KNTPPPLEDPPRG) are compositionally biased toward pro residues.

This is an uncharacterized protein from Homo sapiens (Human).